The sequence spans 184 residues: Shikimate kinase (184 aa).

ATP is bound at residue glycine 20 to arginine 25. Mg(2+) is bound at residue serine 24. 3 residues coordinate substrate: aspartate 42, arginine 66, and glycine 88. Arginine 127 lines the ATP pocket. Arginine 146 is a substrate binding site. Arginine 162 is a binding site for ATP.

It belongs to the shikimate kinase family. In terms of assembly, monomer. Requires Mg(2+) as cofactor.

It is found in the cytoplasm. The catalysed reaction is shikimate + ATP = 3-phosphoshikimate + ADP + H(+). It functions in the pathway metabolic intermediate biosynthesis; chorismate biosynthesis; chorismate from D-erythrose 4-phosphate and phosphoenolpyruvate: step 5/7. In terms of biological role, catalyzes the specific phosphorylation of the 3-hydroxyl group of shikimic acid using ATP as a cosubstrate. This Thermus thermophilus (strain ATCC 27634 / DSM 579 / HB8) protein is Shikimate kinase.